The primary structure comprises 373 residues: MSEKKINLLDLDRKAMRALFADMGEKPFRADQLMKWLYHFGVSDFEEMTNINKVLRQKLAARCEIVAPEISSFQKSTDGTIKFAINVGQGQEVETVYIPEDDRATLCVSSQVGCALECTFCSTGQQGFNRNLTVSEIVGQIWRVSHFLGFAKDTGERPITNVVMMGMGEPLLNLANVIPAMDIMLDDFGFSLSKRRVTLSTSGVVPALDKLGDAIDVALAVSIHAPNDELRDILVPINKKYPLDEFLAGIRRYIAKSNANRGRVTVEYVMLDHINDSTDQAHELAKLMKDTPCKVNLIPFNPYPGSPYGRSSNSRIDRFSKVLMEYGFTVIVRKTRGDDIDAACGQLAGDIRDRTKRLAKKRMQENQISVTMN.

The active-site Proton acceptor is the Glu-94. Residues 100–339 (EDDRATLCVS…VIVRKTRGDD (240 aa)) enclose the Radical SAM core domain. Cys-107 and Cys-344 form a disulfide bridge. Cys-114, Cys-118, and Cys-121 together coordinate [4Fe-4S] cluster. S-adenosyl-L-methionine contacts are provided by residues 168-169 (GE), Ser-200, 222-224 (SIH), and Asn-301. Residue Cys-344 is the S-methylcysteine intermediate of the active site.

Belongs to the radical SAM superfamily. RlmN family. The cofactor is [4Fe-4S] cluster.

It is found in the cytoplasm. It carries out the reaction adenosine(2503) in 23S rRNA + 2 reduced [2Fe-2S]-[ferredoxin] + 2 S-adenosyl-L-methionine = 2-methyladenosine(2503) in 23S rRNA + 5'-deoxyadenosine + L-methionine + 2 oxidized [2Fe-2S]-[ferredoxin] + S-adenosyl-L-homocysteine. The enzyme catalyses adenosine(37) in tRNA + 2 reduced [2Fe-2S]-[ferredoxin] + 2 S-adenosyl-L-methionine = 2-methyladenosine(37) in tRNA + 5'-deoxyadenosine + L-methionine + 2 oxidized [2Fe-2S]-[ferredoxin] + S-adenosyl-L-homocysteine. Functionally, specifically methylates position 2 of adenine 2503 in 23S rRNA and position 2 of adenine 37 in tRNAs. m2A2503 modification seems to play a crucial role in the proofreading step occurring at the peptidyl transferase center and thus would serve to optimize ribosomal fidelity. The polypeptide is Dual-specificity RNA methyltransferase RlmN (Shewanella baltica (strain OS223)).